The sequence spans 346 residues: N-acetyl-gamma-glutamyl-phosphate reductase (346 aa).

Cys-150 is a catalytic residue.

The protein belongs to the NAGSA dehydrogenase family. Type 1 subfamily.

The protein resides in the cytoplasm. The catalysed reaction is N-acetyl-L-glutamate 5-semialdehyde + phosphate + NADP(+) = N-acetyl-L-glutamyl 5-phosphate + NADPH + H(+). The protein operates within amino-acid biosynthesis; L-arginine biosynthesis; N(2)-acetyl-L-ornithine from L-glutamate: step 3/4. Functionally, catalyzes the NADPH-dependent reduction of N-acetyl-5-glutamyl phosphate to yield N-acetyl-L-glutamate 5-semialdehyde. This is N-acetyl-gamma-glutamyl-phosphate reductase from Brevibacillus brevis (strain 47 / JCM 6285 / NBRC 100599).